Here is a 246-residue protein sequence, read N- to C-terminus: Acetoacetate decarboxylase (246 aa).

The Schiff-base intermediate with acetoacetate role is filled by K115.

It belongs to the ADC family.

It catalyses the reaction acetoacetate + H(+) = acetone + CO2. Catalyzes the conversion of acetoacetate to acetone and carbon dioxide. The sequence is that of Acetoacetate decarboxylase from Clostridium beijerinckii (strain ATCC 51743 / NCIMB 8052) (Clostridium acetobutylicum).